Here is a 579-residue protein sequence, read N- to C-terminus: Probable cytochrome c biosynthesis protein (579 aa).

It belongs to the CcmF/CycK/Ccl1/NrfE/CcsA family.

Its subcellular location is the mitochondrion. Functionally, could be involved in assembly and maturation of cytochromes c. May play a role in guidance of apocytochromes and heme groups for the covalent linkage introduced by the cytochrome-c-heme lyase. This Daucus carota (Wild carrot) protein is Probable cytochrome c biosynthesis protein.